A 160-amino-acid polypeptide reads, in one-letter code: Protein Bel-3 (160 aa).

In terms of assembly, homodimer.

It is found in the host cytoplasm. The sequence is that of Protein Bel-3 (bel3) from Human spumaretrovirus (SFVcpz(hu)).